The sequence spans 572 residues: Oxygen-dependent choline dehydrogenase (572 aa).

Position 9 to 38 (9 to 38 (DYVIIGGGSAGSVLGARLSEDKDKNVLVLE)) interacts with FAD. Catalysis depends on His477, which acts as the Proton acceptor.

This sequence belongs to the GMC oxidoreductase family. Requires FAD as cofactor.

It carries out the reaction choline + A = betaine aldehyde + AH2. The enzyme catalyses betaine aldehyde + NAD(+) + H2O = glycine betaine + NADH + 2 H(+). It participates in amine and polyamine biosynthesis; betaine biosynthesis via choline pathway; betaine aldehyde from choline (cytochrome c reductase route): step 1/1. Functionally, involved in the biosynthesis of the osmoprotectant glycine betaine. Catalyzes the oxidation of choline to betaine aldehyde and betaine aldehyde to glycine betaine at the same rate. In Staphylococcus epidermidis (strain ATCC 35984 / DSM 28319 / BCRC 17069 / CCUG 31568 / BM 3577 / RP62A), this protein is Oxygen-dependent choline dehydrogenase.